We begin with the raw amino-acid sequence, 211 residues long: MAQARISAKANEGRFCRSSSMADRSSRLLESLDQLELRVEALREAATAVEQEKEVLLEMIHSIQNSQDMRQISDGEREELNLTANRLMGRTLTVEVSVETIRSPQQQESLKHATRIIDEVVSKFLDDLGNARSHLMSLYSACSSEVPAGPVDQKFQSIVIGCALEDQKKIKRRLETLLRNIENADKAIKLLEHSKGAASKTLQQNAEARFN.

Position 2 is an N-acetylalanine (Ala2). Ser20, Ser31, and Ser73 each carry phosphoserine. Positions 20–61 form a coiled coil; it reads SMADRSSRLLESLDQLELRVEALREAATAVEQEKEVLLEMIH. Residues 109-189 enclose the BAG domain; it reads SLKHATRIID…NIENADKAIK (81 aa).

Binds to the ATPase domain of HSP/HSC70 chaperones. May interact with NWD1. Interacts with HSPA1A (via NBD), HSPA1B (via NBD) and HSPA8. May interact with DNJC9; the interaction seems to be histone-dependent.

Co-chaperone for HSP70 and HSC70 chaperone proteins. Acts as a nucleotide-exchange factor (NEF) promoting the release of ADP from the HSP70 and HSC70 proteins thereby triggering client/substrate protein release. The sequence is that of BAG family molecular chaperone regulator 2 from Bos taurus (Bovine).